The chain runs to 161 residues: Phosphopantetheine adenylyltransferase (161 aa).

Ser9 contributes to the substrate binding site. ATP contacts are provided by residues 9 to 10 (SF) and His17. Substrate-binding residues include Lys41, Thr73, and Arg87. Residues 88-90 (GLR), Glu98, and 123-129 (YSFISST) each bind ATP.

Belongs to the bacterial CoaD family. Homohexamer. Requires Mg(2+) as cofactor.

It is found in the cytoplasm. The enzyme catalyses (R)-4'-phosphopantetheine + ATP + H(+) = 3'-dephospho-CoA + diphosphate. Its pathway is cofactor biosynthesis; coenzyme A biosynthesis; CoA from (R)-pantothenate: step 4/5. Reversibly transfers an adenylyl group from ATP to 4'-phosphopantetheine, yielding dephospho-CoA (dPCoA) and pyrophosphate. This Desulforamulus reducens (strain ATCC BAA-1160 / DSM 100696 / MI-1) (Desulfotomaculum reducens) protein is Phosphopantetheine adenylyltransferase.